A 1097-amino-acid polypeptide reads, in one-letter code: DNA-directed RNA polymerase subunit beta (1097 aa).

The interval 1073–1097 (DVNPRRSTPSRPTYESLGVADYDED) is disordered.

This sequence belongs to the RNA polymerase beta chain family. In terms of assembly, in cyanobacteria the RNAP catalytic core is composed of 2 alpha, 1 beta, 1 beta', 1 gamma and 1 omega subunit. When a sigma factor is associated with the core the holoenzyme is formed, which can initiate transcription.

The enzyme catalyses RNA(n) + a ribonucleoside 5'-triphosphate = RNA(n+1) + diphosphate. DNA-dependent RNA polymerase catalyzes the transcription of DNA into RNA using the four ribonucleoside triphosphates as substrates. This chain is DNA-directed RNA polymerase subunit beta, found in Synechococcus sp. (strain CC9311).